Consider the following 238-residue polypeptide: 6-phosphogluconolactonase (238 aa).

This sequence belongs to the glucosamine/galactosamine-6-phosphate isomerase family. 6-phosphogluconolactonase subfamily.

It catalyses the reaction 6-phospho-D-glucono-1,5-lactone + H2O = 6-phospho-D-gluconate + H(+). Its pathway is carbohydrate degradation; pentose phosphate pathway; D-ribulose 5-phosphate from D-glucose 6-phosphate (oxidative stage): step 2/3. Its function is as follows. Hydrolysis of 6-phosphogluconolactone to 6-phosphogluconate. The sequence is that of 6-phosphogluconolactonase (pgl) from Mesorhizobium japonicum (strain LMG 29417 / CECT 9101 / MAFF 303099) (Mesorhizobium loti (strain MAFF 303099)).